The sequence spans 516 residues: Leucine-rich repeat transmembrane neuronal protein 2 (516 aa).

A signal peptide spans 1–33; sequence MGLHFKWPLGAPMLAAIYAMSMVLKMLPALGMA. The LRRNT domain occupies 34-61; the sequence is CPPKCRCEKLLFYCDSQGFHSVPNATDK. Residues 34 to 422 lie on the Extracellular side of the membrane; it reads CPPKCRCEKL…EPDNAIFTQR (389 aa). An N-linked (GlcNAc...) asparagine glycan is attached at Asn-57. LRR repeat units lie at residues 63–83, 86–107, 110–131, 134–155, 158–179, 182–203, 206–227, 230–251, 254–275, and 278–299; these read SLGL…QFAS, QLTW…AFQG, KLKE…TFTQ, NLQN…LFYG, KLQT…LFWD, SLEF…GFAG, KLRE…HFLR, SLHT…MEWT, TLEK…VFET, and NLKI…ILNS. N-linked (GlcNAc...) asparagine glycosylation is present at Asn-126. The N-linked (GlcNAc...) asparagine glycan is linked to Asn-243. One can recognise an LRRCT domain in the interval 311-362; sequence NLWECSARICALASWLGSFQGRWEHSILCHSPDHTQGEDILDAVHGFQLCWN. A glycan (N-linked (GlcNAc...) asparagine) is linked at Asn-362. The chain crosses the membrane as a helical span at residues 423 to 443; sequence VITGTMALLFSFFFIIFIVFI. Over 444–516 the chain is Cytoplasmic; sequence SRKCCPPTLR…QQLPYKECEV (73 aa). The Involved in DLG4-binding motif lies at 513–516; it reads ECEV.

It belongs to the LRRTM family. Interacts with DLG4. Interacts with neurexin NRXN1; interaction is mediated by heparan sulfate glycan modification on neurexin. In terms of tissue distribution, expressed in neuronal tissues.

It localises to the cell membrane. It is found in the postsynaptic cell membrane. Involved in the development and maintenance of excitatory synapses in the vertebrate nervous system. Regulates surface expression of AMPA receptors and instructs the development of functional glutamate release sites. Acts as a ligand for the presynaptic receptors NRXN1-A and NRXN1-B. The polypeptide is Leucine-rich repeat transmembrane neuronal protein 2 (LRRTM2) (Homo sapiens (Human)).